The chain runs to 492 residues: Lysine--tRNA ligase (492 aa).

Glu403 and Glu410 together coordinate Mg(2+).

The protein belongs to the class-II aminoacyl-tRNA synthetase family. As to quaternary structure, homodimer. It depends on Mg(2+) as a cofactor.

The protein resides in the cytoplasm. The catalysed reaction is tRNA(Lys) + L-lysine + ATP = L-lysyl-tRNA(Lys) + AMP + diphosphate. The chain is Lysine--tRNA ligase from Mycoplasmoides gallisepticum (strain R(low / passage 15 / clone 2)) (Mycoplasma gallisepticum).